The primary structure comprises 844 residues: 3',5'-cyclic-AMP phosphodiesterase 4A (844 aa).

The tract at residues 1-124 (MEPPAAPSER…RSPLDSQASP (124 aa)) is disordered. At Ser-13 the chain carries Phosphoserine. Low complexity predominate over residues 36-46 (QPRTPIRIQQR). The span at 51–78 (SAERSEPERSPHRPIERADAVDTGDRPG) shows a compositional bias: basic and acidic residues. The span at 82 to 91 (TRMSWPSSFH) shows a compositional bias: polar residues. Ser-147, Ser-152, Ser-160, Ser-204, and Ser-333 each carry phosphoserine. The PDEase domain occupies 343–672 (VKTDQEDLLA…DWYHSAIRQS (330 aa)). Residue Lys-344 forms a Glycyl lysine isopeptide (Lys-Gly) (interchain with G-Cter in SUMO) linkage. His-419 serves as the catalytic Proton donor. Residue His-419 participates in 3',5'-cyclic AMP binding. Residues His-419 and His-423 each coordinate AMP. Residues His-423, His-459, Asp-460, and Asp-577 each contribute to the Zn(2+) site. AMP is bound by residues Asp-460, Asp-577, Gln-628, and Phe-631. Mg(2+) is bound at residue Asp-460. Position 460 (Asp-460) interacts with Mn(2+). Positions 628 and 631 each coordinate 3',5'-cyclic AMP. 2 positions are modified to phosphoserine: Ser-672 and Ser-674. A disordered region spans residues 819-844 (ACSGTSGDNSAVISAPGRWGSGGDPA). The segment covering 820-830 (CSGTSGDNSAV) has biased composition (polar residues).

The protein belongs to the cyclic nucleotide phosphodiesterase family. PDE4 subfamily. As to quaternary structure, interacts with LYN (via SH3 domain). Interacts with ARRB2. Zn(2+) serves as cofactor. Mg(2+) is required as a cofactor. It depends on Mn(2+) as a cofactor. In terms of processing, proteolytically cleaved by CASP3.

The protein localises to the cytoplasm. It localises to the cytosol. Its subcellular location is the membrane. It catalyses the reaction 3',5'-cyclic AMP + H2O = AMP + H(+). It participates in purine metabolism; 3',5'-cyclic AMP degradation; AMP from 3',5'-cyclic AMP: step 1/1. Inhibited by rolipram and diazepam. In terms of biological role, hydrolyzes the second messenger 3',5'-cyclic AMP (cAMP), which is a key regulator of many important physiological processes. Functionally, efficiently hydrolyzes cAMP. In Mus musculus (Mouse), this protein is 3',5'-cyclic-AMP phosphodiesterase 4A (Pde4a).